The primary structure comprises 459 residues: Cysteine--tRNA ligase (459 aa).

Zn(2+) is bound at residue Cys-28. The 'HIGH' region motif lies at 30-40 (ITIYDLCHIGH). Cys-209, His-234, and Glu-238 together coordinate Zn(2+). The 'KMSKS' region signature appears at 266–270 (KMSKS). Lys-269 provides a ligand contact to ATP.

This sequence belongs to the class-I aminoacyl-tRNA synthetase family. As to quaternary structure, monomer. Requires Zn(2+) as cofactor.

It is found in the cytoplasm. It carries out the reaction tRNA(Cys) + L-cysteine + ATP = L-cysteinyl-tRNA(Cys) + AMP + diphosphate. The chain is Cysteine--tRNA ligase from Shewanella denitrificans (strain OS217 / ATCC BAA-1090 / DSM 15013).